A 133-amino-acid chain; its full sequence is ATP synthase epsilon chain, chloroplastic (133 aa).

It belongs to the ATPase epsilon chain family. In terms of assembly, F-type ATPases have 2 components, CF(1) - the catalytic core - and CF(0) - the membrane proton channel. CF(1) has five subunits: alpha(3), beta(3), gamma(1), delta(1), epsilon(1). CF(0) has three main subunits: a, b and c.

The protein resides in the plastid. It is found in the chloroplast thylakoid membrane. Functionally, produces ATP from ADP in the presence of a proton gradient across the membrane. This is ATP synthase epsilon chain, chloroplastic from Zygnema circumcarinatum (Green alga).